The following is a 582-amino-acid chain: tRNA(Ile)-lysidine synthase (582 aa).

Position 46–51 (46–51) interacts with ATP; it reads SGGADS. The CMP/dCMP-type deaminase domain maps to 402–525; sequence DPLHAAMGEA…DLLADHWGWR (124 aa). The disordered stretch occupies residues 548-582; sequence VRRRSADTPQTPNAETPAPRSSRSTSASGKPTMLE. The segment covering 563–575 has biased composition (low complexity); the sequence is TPAPRSSRSTSAS.

The protein belongs to the tRNA(Ile)-lysidine synthase family.

Its subcellular location is the cytoplasm. The catalysed reaction is cytidine(34) in tRNA(Ile2) + L-lysine + ATP = lysidine(34) in tRNA(Ile2) + AMP + diphosphate + H(+). In terms of biological role, ligates lysine onto the cytidine present at position 34 of the AUA codon-specific tRNA(Ile) that contains the anticodon CAU, in an ATP-dependent manner. Cytidine is converted to lysidine, thus changing the amino acid specificity of the tRNA from methionine to isoleucine. In Deinococcus radiodurans (strain ATCC 13939 / DSM 20539 / JCM 16871 / CCUG 27074 / LMG 4051 / NBRC 15346 / NCIMB 9279 / VKM B-1422 / R1), this protein is tRNA(Ile)-lysidine synthase.